The sequence spans 342 residues: Ion-translocating oxidoreductase complex subunit D (342 aa).

3 helical membrane passes run Gly-42 to Leu-62, Asn-68 to Pro-90, and Ala-124 to Ala-144. An FMN phosphoryl threonine modification is found at Thr-171. 5 consecutive transmembrane segments (helical) span residues Phe-200 to Ile-220, Trp-227 to Ile-247, Phe-252 to Ala-272, Leu-286 to Pro-306, and Ala-308 to Gln-328.

This sequence belongs to the NqrB/RnfD family. The complex is composed of six subunits: RnfA, RnfB, RnfC, RnfD, RnfE and RnfG. The cofactor is FMN.

It localises to the cell inner membrane. Functionally, part of a membrane-bound complex that couples electron transfer with translocation of ions across the membrane. The sequence is that of Ion-translocating oxidoreductase complex subunit D from Alcanivorax borkumensis (strain ATCC 700651 / DSM 11573 / NCIMB 13689 / SK2).